Consider the following 236-residue polypeptide: MIRRYWNINLKEMLETGVHFGHATRKWNPKMAPYISAKRKGIHITNLTRTARFLSEACDLVFDAASRRKQFLIVGTKNKAADPVARAAIRARCHYVNKKWLGGLLTNWSTTEMRLQKFRDLRMEQKTGGIHRLPKGDAARLKRQLFHLQTYLGGIKYMTGLPDIVIIVDQQEEYMALQECITLGIPTICLIDTNCDPDLTDISIPANDDAIASIRLILNKLVFAICEGRSSYIRNP.

This sequence belongs to the universal ribosomal protein uS2 family.

It is found in the plastid. It localises to the chloroplast. This Populus alba (White poplar) protein is Small ribosomal subunit protein uS2c (rps2).